Consider the following 422-residue polypeptide: MLRDTQIFTLIEKEYQRQNEGLELIASENFVSQQIMEAAGSILTNKYAEGLPGRRYYGGCEIVDEIETLAIERAKSLFHASWANVQPHSGSQANAAVMFAVLEPGDKILGFNLAHGGHLTHGSPVNFSGQLYESHFYGVQPETGLIDWEEVGTIAEQVNPKLIICGASAYSRDWDYKRLRAIADQVGALLLADISHPAGLISRGLLNDPVPYCHFITTTTHKTLRGPRGGMILMGADFENPFGKKTTKGKLKSMSTLLDASVFPGIQGGPLEHIIAAKAIAFQEAMSDDYFNYILQVQKNTRQLAQSFVKRGYNIVSGGTDNHLILIDLRNKGITGKLAEEALIKASITLNKNMVPFDDQSPLITSGIRIGTPAVTTRGMQETDMEQIAAWIDDVLKNHENESKIDSIRKEIGNYMLQFPLP.

(6S)-5,6,7,8-tetrahydrofolate contacts are provided by residues L113 and 117-119; that span reads GHL. K222 carries the N6-(pyridoxal phosphate)lysine modification.

Belongs to the SHMT family. As to quaternary structure, homodimer. Pyridoxal 5'-phosphate serves as cofactor.

Its subcellular location is the cytoplasm. The enzyme catalyses (6R)-5,10-methylene-5,6,7,8-tetrahydrofolate + glycine + H2O = (6S)-5,6,7,8-tetrahydrofolate + L-serine. Its pathway is one-carbon metabolism; tetrahydrofolate interconversion. The protein operates within amino-acid biosynthesis; glycine biosynthesis; glycine from L-serine: step 1/1. Functionally, catalyzes the reversible interconversion of serine and glycine with tetrahydrofolate (THF) serving as the one-carbon carrier. This reaction serves as the major source of one-carbon groups required for the biosynthesis of purines, thymidylate, methionine, and other important biomolecules. Also exhibits THF-independent aldolase activity toward beta-hydroxyamino acids, producing glycine and aldehydes, via a retro-aldol mechanism. The protein is Serine hydroxymethyltransferase of Amoebophilus asiaticus (strain 5a2).